We begin with the raw amino-acid sequence, 289 residues long: MDGILNIFKPIGLTSFDVVRQVKKISKEKKVGHTGTLDPLASGVLPICIGKATKIVDFVMEGKKIYDAEMKLGEISDTYDREGKILKVNQVTSSENNIVEAIMSFQGEILQVPPMYSALKVNGIKLYDLARQGIEIERASRKIHIYAIKILSIDIPFVKFRVECSKGTYIRSLCYDIGNKLGCGALMYNLTRVSSGNFNSSFSIPLEDLNEQNITENIINVDKCLENYDEIAVDEKFEKLLVNGVKVSDRRLIEKIPDNKTYRVYNMERKFLGLGNLSEEGFKIIKLLT.

The active-site Nucleophile is D38.

The protein belongs to the pseudouridine synthase TruB family. Type 1 subfamily.

The enzyme catalyses uridine(55) in tRNA = pseudouridine(55) in tRNA. Functionally, responsible for synthesis of pseudouridine from uracil-55 in the psi GC loop of transfer RNAs. This Clostridium acetobutylicum (strain ATCC 824 / DSM 792 / JCM 1419 / IAM 19013 / LMG 5710 / NBRC 13948 / NRRL B-527 / VKM B-1787 / 2291 / W) protein is tRNA pseudouridine synthase B.